Reading from the N-terminus, the 375-residue chain is MASCTLLAVLVFLCAIVSCFSDNPIDSCWRGDANWDQNRMKLADCAVGFGSSAMGGKGGAFYTVTSSDDDPVNPAPGTLRYGATRERSLWIIFSKNLNIKLNMPLYIAGNKTIDGRGAEVHIGNGGPCLFMRTVSHVILHGLNIHGCNTSVSGNVLISEASGVVPVHAQDGDAITMRNVTDVWIDHNSLSDSSDGLVDVTLASTGVTISNNHFFNHHKVMLLGHSDIYSDDKSMKVTVAFNQFGPNAGQRMPRARYGLIHVANNNYDPWSIYAIGGSSNPTILSEGNSFTAPNDSDKKEVTRRVGCESPSTCANWVWRSTQDSFNNGAYFVSSGKNEGTNIYNNNEAFKVENGSAAPQLTKNAGVLTCILSKPCS.

The first 21 residues, methionine 1–serine 21, serve as a signal peptide directing secretion. A disulfide bridge connects residues cysteine 28 and cysteine 45. Asparagine 110 carries an N-linked (GlcNAc...) asparagine glycan. The cysteines at positions 128 and 147 are disulfide-linked. An N-linked (GlcNAc...) asparagine glycan is attached at asparagine 148. Residue aspartate 170 participates in Ca(2+) binding. Asparagine 178 carries an N-linked (GlcNAc...) asparagine glycan. Residues aspartate 194 and aspartate 198 each coordinate Ca(2+). The active site involves arginine 250. An N-linked (GlcNAc...) asparagine glycan is attached at asparagine 293. A disulfide bond links cysteine 306 and cysteine 312. The N-linked (GlcNAc...) asparagine glycan is linked to asparagine 352.

It belongs to the polysaccharide lyase 1 family. Amb a subfamily. It depends on Ca(2+) as a cofactor.

It catalyses the reaction Eliminative cleavage of (1-&gt;4)-alpha-D-galacturonan to give oligosaccharides with 4-deoxy-alpha-D-galact-4-enuronosyl groups at their non-reducing ends.. Its pathway is glycan metabolism; pectin degradation; 2-dehydro-3-deoxy-D-gluconate from pectin: step 2/5. Its function is as follows. Has pectate lyase activity. In Chamaecyparis obtusa (Hinoki false-cypress), this protein is Pectate lyase 1.